A 394-amino-acid chain; its full sequence is Venom metalloproteinase antarease TserMP_A (394 aa).

The signal sequence occupies residues 1-16 (MISYLASIFLLATVSA). A propeptide spanning residues 17–157 (VPSGRVEVVF…NAENVSRMAR (141 aa)) is cleaved from the precursor. In terms of domain architecture, Peptidase M12B spans 162–391 (IVVEYYIVTD…PTASCIFQQC (230 aa)). A disulfide bond links Cys-295 and Cys-386. Residue His-319 coordinates Zn(2+). Glu-320 is a catalytic residue. Zn(2+) is bound by residues His-323 and His-329.

Requires Zn(2+) as cofactor. Contains 4 disulfide bonds. As to expression, expressed by the venom gland.

It is found in the secreted. Inhibited by EDTA. In terms of biological role, acts as a metalloprotease. Penetrates intact tissue and specifically cleaves the vesicle-associated membrane protein 2 (VAMP2) (part of the SNARE complex) involved in pancreatic secretion, thus disrupting the normal vesicular traffic. In Tityus serrulatus (Brazilian scorpion), this protein is Venom metalloproteinase antarease TserMP_A.